The sequence spans 426 residues: MPSNQELFERAQKTIPGGVNSPVRAFRSVGGTPRFIERAQGAYFWDAEGKRYIDYIGSWGPMIVGHVHPEVLEAVQRVLSKGFSFGAPTEAEIEIAEEICKLVPSMEQVRMVSSGTEATMSALRLARGFTDRSRIVKFEGCYHGHADSLLVKAGSGLLTFGNPTSAGVPVDIAKHTTVLEYNNVAALEEAFSAFGNEIASVIVEPVAGNMNLVRATPEFLGALRRLCSEYGSVLIFDEVMCGFRVALGGAQQLYGIRPDLTCLGKVIGGGMPAAAFGGRRDIMAHLAPLGGVYQAGTLSGNPIAVAAGLKTLQLIQAPGFYDALSRRTTRLVQDLTEAAREAKIPFTADSVGGMFGLYFSESVPASFAEISRCDVPRFNAFFHKMLDAGVYFAPSAYEAGFVSSAHDDATVEATIEAARGAFKSLA.

Lys-265 carries the N6-(pyridoxal phosphate)lysine modification.

It belongs to the class-III pyridoxal-phosphate-dependent aminotransferase family. HemL subfamily. Homodimer. The cofactor is pyridoxal 5'-phosphate.

The protein resides in the cytoplasm. The catalysed reaction is (S)-4-amino-5-oxopentanoate = 5-aminolevulinate. Its pathway is porphyrin-containing compound metabolism; protoporphyrin-IX biosynthesis; 5-aminolevulinate from L-glutamyl-tRNA(Glu): step 2/2. This chain is Glutamate-1-semialdehyde 2,1-aminomutase, found in Paraburkholderia phymatum (strain DSM 17167 / CIP 108236 / LMG 21445 / STM815) (Burkholderia phymatum).